The sequence spans 231 residues: MRIAVIGAMEEEVRILRDKLEQAEIESVAGCEFTKGMLVGHEVILLKSGIGKVNAAMSTTILLERYQPEKVINTGSAGGFHHALNVGDVVISTEVRHHDVDVTAFNYEYGQVPGMPPGFKADKELVALAEQCMKEEENIQVVKGMIATGDSFMSDPNRVAAIRGKFENLYAVEMEAAAVAQVCHQYNVPFVIIRALSDIAGKESNVSFDQFLDQAALHSTNFIVKVLKELK.

The active-site Proton acceptor is Glu-12. Residues Gly-78, Met-153, and 174–175 (ME) each bind substrate. Asp-198 (proton donor) is an active-site residue.

The protein belongs to the PNP/UDP phosphorylase family. MtnN subfamily.

It carries out the reaction S-adenosyl-L-homocysteine + H2O = S-(5-deoxy-D-ribos-5-yl)-L-homocysteine + adenine. The catalysed reaction is S-methyl-5'-thioadenosine + H2O = 5-(methylsulfanyl)-D-ribose + adenine. It catalyses the reaction 5'-deoxyadenosine + H2O = 5-deoxy-D-ribose + adenine. It participates in amino-acid biosynthesis; L-methionine biosynthesis via salvage pathway; S-methyl-5-thio-alpha-D-ribose 1-phosphate from S-methyl-5'-thioadenosine (hydrolase route): step 1/2. Its function is as follows. Catalyzes the irreversible cleavage of the glycosidic bond in both 5'-methylthioadenosine (MTA) and S-adenosylhomocysteine (SAH/AdoHcy) to adenine and the corresponding thioribose, 5'-methylthioribose and S-ribosylhomocysteine, respectively. Also cleaves 5'-deoxyadenosine, a toxic by-product of radical S-adenosylmethionine (SAM) enzymes, into 5-deoxyribose and adenine. This Bacillus cytotoxicus (strain DSM 22905 / CIP 110041 / 391-98 / NVH 391-98) protein is 5'-methylthioadenosine/S-adenosylhomocysteine nucleosidase.